A 324-amino-acid chain; its full sequence is Methionyl-tRNA formyltransferase (324 aa).

114–117 (SLLP) lines the (6S)-5,6,7,8-tetrahydrofolate pocket.

Belongs to the Fmt family.

The catalysed reaction is L-methionyl-tRNA(fMet) + (6R)-10-formyltetrahydrofolate = N-formyl-L-methionyl-tRNA(fMet) + (6S)-5,6,7,8-tetrahydrofolate + H(+). Functionally, attaches a formyl group to the free amino group of methionyl-tRNA(fMet). The formyl group appears to play a dual role in the initiator identity of N-formylmethionyl-tRNA by promoting its recognition by IF2 and preventing the misappropriation of this tRNA by the elongation apparatus. This is Methionyl-tRNA formyltransferase from Phocaeicola vulgatus (strain ATCC 8482 / DSM 1447 / JCM 5826 / CCUG 4940 / NBRC 14291 / NCTC 11154) (Bacteroides vulgatus).